We begin with the raw amino-acid sequence, 820 residues long: Cell division control protein 48 homolog C (820 aa).

Disordered regions lie at residues 72–157 (RVKD…RFDL) and 169–188 (LNSS…VEVE). A compositionally biased stretch (acidic residues) spans 76 to 87 (EDEDDNIGDEEG). Residues 85 to 122 (EEGSASQRKKQRRVDEKEEKLQRAEQSHLRKRNMERSV) adopt a coiled-coil conformation. A compositionally biased stretch (basic and acidic residues) spans 97–119 (RVDEKEEKLQRAEQSHLRKRNME). Residues 121–142 (SVSSSPSSSSSSEDSGDVSTSE) show a composition bias toward low complexity. Residues 274–281 (GPPGCGKT) and 569–576 (GPPGCGKT) contribute to the ATP site.

The protein belongs to the AAA ATPase family.

It is found in the nucleus. Its subcellular location is the cytoplasm. It localises to the cytoskeleton. The protein resides in the phragmoplast. In terms of biological role, probably functions in cell division and growth processes. Interacts with certain SNAREs as part of specialized membrane fusion events where vesicles from the same organelle fuse (homotypic fusion). This chain is Cell division control protein 48 homolog C (CDC48C), found in Arabidopsis thaliana (Mouse-ear cress).